A 541-amino-acid polypeptide reads, in one-letter code: 3-oxoacyl-[acyl-carrier-protein] synthase II, chloroplastic (541 aa).

Residues 1–103 (MVGASSSYAS…NRNQRRLNRA (103 aa)) constitute a chloroplast transit peptide. The region spanning 129–539 (QRRVVVTGMG…GHNSSIIFAP (411 aa)) is the Ketosynthase family 3 (KS3) domain. Active-site for beta-ketoacyl synthase activity residues include Cys292, His432, and His468.

It belongs to the thiolase-like superfamily. Beta-ketoacyl-ACP synthases family. In terms of assembly, homodimer. In terms of tissue distribution, mostly expressed in siliques, and, to a lower extent, in leaves, stems, flower buds, and flowers.

The protein resides in the plastid. It localises to the chloroplast stroma. The enzyme catalyses a fatty acyl-[ACP] + malonyl-[ACP] + H(+) = a 3-oxoacyl-[ACP] + holo-[ACP] + CO2. Its function is as follows. Essential protein that catalyzes the condensation reaction of fatty acid synthesis by the addition to an acyl acceptor of two carbons from malonyl-ACP. Specific for elongation from C-16 and C-16 to unsaturated C-18 fatty acids. Confers resistance to low temperatures by maintaining chloroplast membranes integrity. Involved in the regulation of fatty acids ratios during seed metabolism. Required for embryo development, especially at the transition from the globular to the heart stage. This chain is 3-oxoacyl-[acyl-carrier-protein] synthase II, chloroplastic (KAS2), found in Arabidopsis thaliana (Mouse-ear cress).